A 514-amino-acid chain; its full sequence is Flagellin B (514 aa).

This sequence belongs to the bacterial flagellin family. Heteromer of FlaA and FlaB. FlaB is located proximal to the hook while the remainder of the filament is composed of the predominant FlaA.

Its subcellular location is the secreted. It is found in the bacterial flagellum. Functionally, flagellin is the subunit protein which polymerizes to form the filaments of bacterial flagella. Important for motility and virulence. The polypeptide is Flagellin B (flaB) (Helicobacter pylori (strain ATCC 700392 / 26695) (Campylobacter pylori)).